The sequence spans 145 residues: Large ribosomal subunit protein uL11 (145 aa).

It belongs to the universal ribosomal protein uL11 family. As to quaternary structure, part of the ribosomal stalk of the 50S ribosomal subunit. Interacts with L10 and the large rRNA to form the base of the stalk. L10 forms an elongated spine to which L12 dimers bind in a sequential fashion forming a multimeric L10(L12)X complex. One or more lysine residues are methylated.

In terms of biological role, forms part of the ribosomal stalk which helps the ribosome interact with GTP-bound translation factors. The polypeptide is Large ribosomal subunit protein uL11 (Flavobacterium johnsoniae (strain ATCC 17061 / DSM 2064 / JCM 8514 / BCRC 14874 / CCUG 350202 / NBRC 14942 / NCIMB 11054 / UW101) (Cytophaga johnsonae)).